A 338-amino-acid chain; its full sequence is Phenylalanine--tRNA ligase alpha subunit (338 aa).

Glutamate 252 is a Mg(2+) binding site.

Belongs to the class-II aminoacyl-tRNA synthetase family. Phe-tRNA synthetase alpha subunit type 1 subfamily. Tetramer of two alpha and two beta subunits. Requires Mg(2+) as cofactor.

The protein localises to the cytoplasm. The catalysed reaction is tRNA(Phe) + L-phenylalanine + ATP = L-phenylalanyl-tRNA(Phe) + AMP + diphosphate + H(+). This chain is Phenylalanine--tRNA ligase alpha subunit, found in Pseudomonas fluorescens (strain Pf0-1).